The chain runs to 576 residues: TRAF-type zinc finger domain-containing protein 1 (576 aa).

An N-acetylalanine modification is found at alanine 2. The TRAF-type zinc-finger motif lies at 27–103 (IHEIHCQRNI…DLELSVVKLK (77 aa)). Serine 278, serine 320, serine 326, serine 327, serine 409, serine 415, serine 430, and serine 450 each carry phosphoserine. The disordered stretch occupies residues 402-432 (EGIPTQDSQPEDRSPELSRRRVKHQGDLSSG). The span at 411-420 (PEDRSPELSR) shows a compositional bias: basic and acidic residues. Disordered regions lie at residues 465-491 (LNSSGPRSDCQRSPPGVLKLNNSGSQD) and 529-576 (HGSP…EEEE). Residue serine 531 is modified to Phosphoserine. Residues 540–552 (GSRSSRVTPTAAS) show a composition bias toward polar residues.

Interacts with MAVS, TICAM1, TRAF1, TRAF2, TRAF3 and TRAF6. Expressed in vascular smooth muscle cells.

In terms of biological role, negative feedback regulator that controls excessive innate immune responses. Regulates both Toll-like receptor 4 (TLR4) and DDX58/RIG1-like helicases (RLH) pathways. May inhibit the LTR pathway by direct interaction with TRAF6 and attenuation of NF-kappa-B activation. May negatively regulate the RLH pathway downstream from MAVS and upstream of NF-kappa-B and IRF3. The chain is TRAF-type zinc finger domain-containing protein 1 (Trafd1) from Rattus norvegicus (Rat).